Here is a 213-residue protein sequence, read N- to C-terminus: ATP-dependent dethiobiotin synthetase BioD (213 aa).

13–18 (GIGKTV) is a binding site for ATP. Thr-17 is a Mg(2+) binding site. The active site involves Lys-33. Glu-100 serves as a coordination point for Mg(2+). ATP is bound by residues 100-103 (EGAG) and 184-186 (PHL).

It belongs to the dethiobiotin synthetase family. In terms of assembly, homodimer. The cofactor is Mg(2+).

The protein localises to the cytoplasm. The catalysed reaction is (7R,8S)-7,8-diammoniononanoate + CO2 + ATP = (4R,5S)-dethiobiotin + ADP + phosphate + 3 H(+). It participates in cofactor biosynthesis; biotin biosynthesis; biotin from 7,8-diaminononanoate: step 1/2. Its function is as follows. Catalyzes a mechanistically unusual reaction, the ATP-dependent insertion of CO2 between the N7 and N8 nitrogen atoms of 7,8-diaminopelargonic acid (DAPA, also called 7,8-diammoniononanoate) to form a ureido ring. The chain is ATP-dependent dethiobiotin synthetase BioD from Rhodopseudomonas palustris (strain BisA53).